Consider the following 147-residue polypeptide: Hemoglobin subunit beta (147 aa).

Val2 is subject to N-acetylvaline. A Globin domain is found at 3 to 147; it reads HLTPEEKSAV…VANALAHKYH (145 aa). The residue at position 13 (Thr13) is a Phosphothreonine. Position 45 is a phosphoserine (Ser45). Lys60 carries the post-translational modification N6-acetyllysine. His64 contributes to the heme b binding site. Residue Lys83 is modified to N6-acetyllysine. His93 is a binding site for heme b. An S-nitrosocysteine modification is found at Cys94. The residue at position 145 (Lys145) is an N6-acetyllysine.

It belongs to the globin family. Heterotetramer of two alpha chains and two beta chains in adult hemoglobin A (HbA). Red blood cells.

Functionally, involved in oxygen transport from the lung to the various peripheral tissues. The protein is Hemoglobin subunit beta (HBB) of Pan paniscus (Pygmy chimpanzee).